Here is a 150-residue protein sequence, read N- to C-terminus: Large ribosomal subunit protein bL9 (150 aa).

This sequence belongs to the bacterial ribosomal protein bL9 family.

Functionally, binds to the 23S rRNA. This Corynebacterium diphtheriae (strain ATCC 700971 / NCTC 13129 / Biotype gravis) protein is Large ribosomal subunit protein bL9.